The sequence spans 400 residues: Acetate kinase (400 aa).

N10 provides a ligand contact to Mg(2+). K17 provides a ligand contact to ATP. R91 is a binding site for substrate. D150 serves as the catalytic Proton donor/acceptor. ATP is bound by residues 210–214, 285–287, and 333–337; these read HLGNG, DCR, and GIGEN. A Mg(2+)-binding site is contributed by E387.

The protein belongs to the acetokinase family. Homodimer. Mg(2+) is required as a cofactor. Requires Mn(2+) as cofactor.

It localises to the cytoplasm. It carries out the reaction acetate + ATP = acetyl phosphate + ADP. It participates in metabolic intermediate biosynthesis; acetyl-CoA biosynthesis; acetyl-CoA from acetate: step 1/2. Functionally, catalyzes the formation of acetyl phosphate from acetate and ATP. Can also catalyze the reverse reaction. In Pectobacterium atrosepticum (strain SCRI 1043 / ATCC BAA-672) (Erwinia carotovora subsp. atroseptica), this protein is Acetate kinase.